Consider the following 446-residue polypeptide: T-box transcription factor TBX20 (446 aa).

The tract at residues 50–80 is disordered; it reads SCHPNLGDLPPLETHSDFSSGGGTGSGAPLC. The segment at residues 108–287 is a DNA-binding region (T-box); that stretch reads LWDKFHELGT…SNPFAKGFRD (180 aa).

The protein localises to the nucleus. In terms of biological role, transcriptional regulator that may play a very early role in the differentiation of the cardiac precursors. The polypeptide is T-box transcription factor TBX20 (tbx20) (Danio rerio (Zebrafish)).